The chain runs to 544 residues: (E,E)-germacrene B synthase (544 aa).

Mg(2+) contacts are provided by D296, D300, and E449. The DDXXD motif signature appears at 296-300; that stretch reads DDTFD.

The protein belongs to the terpene synthase family. The cofactor is Mg(2+). Mn(2+) is required as a cofactor.

The protein resides in the cytoplasm. The catalysed reaction is (2E,6E)-farnesyl diphosphate = (1E,4E)-germacrene B + diphosphate. Its pathway is secondary metabolite biosynthesis; terpenoid biosynthesis. Functionally, involved in the biosynthesis of germacrene B. In Solanum habrochaites (Wild tomato), this protein is (E,E)-germacrene B synthase (SSTLH1).